A 353-amino-acid chain; its full sequence is CCN family member 3 (353 aa).

Residues 1-26 form the signal peptide; that stretch reads MEPGGGHSLPVLLLLLLLLLLRPSEV. One can recognise an IGFBP N-terminal domain in the interval 29–103; sequence REAPCPRPCG…GGGTGICMVL (75 aa). Cystine bridges form between C33–C59, C37–C61, C41–C62, C48–C65, C73–C87, and C79–C100. Residues 106–172 enclose the VWFC domain; the sequence is DNCVFDGMIY…GECCEKWVCE (67 aa). One can recognise a TSP type-1 domain in the interval 203-248; the sequence is NCIEQTTEWSACSRSCGMGFSTRVTNRNQQCEMVKQTRLCMMRPCE. 5 cysteine pairs are disulfide-bonded: C260–C297, C277–C311, C288–C327, C291–C329, and C296–C333. The region spanning 260-334 is the CTCK domain; sequence CIRTKKSMKA…NTCVCHGNCP (75 aa). A glycan (N-linked (GlcNAc...) asparagine) is linked at N276.

Belongs to the CCN family.

It localises to the secreted. The protein localises to the cytoplasm. Its subcellular location is the cell junction. The protein resides in the gap junction. In terms of biological role, immediate-early protein likely to play a role in cell growth regulation. This chain is CCN family member 3 (CCN3), found in Coturnix japonica (Japanese quail).